We begin with the raw amino-acid sequence, 819 residues long: Leucine--tRNA ligase (819 aa).

A 'HIGH' region motif is present at residues 42-52 (PYPSGRLHMGH). Residues 576 to 580 (KMSKS) carry the 'KMSKS' region motif. Position 579 (Lys-579) interacts with ATP.

It belongs to the class-I aminoacyl-tRNA synthetase family.

The protein resides in the cytoplasm. The catalysed reaction is tRNA(Leu) + L-leucine + ATP = L-leucyl-tRNA(Leu) + AMP + diphosphate. The polypeptide is Leucine--tRNA ligase (Nitrosococcus oceani (strain ATCC 19707 / BCRC 17464 / JCM 30415 / NCIMB 11848 / C-107)).